We begin with the raw amino-acid sequence, 575 residues long: Delta-1-pyrroline-5-carboxylate dehydrogenase, mitochondrial (575 aa).

297 to 302 provides a ligand contact to NAD(+); sequence GKIQSG. The active-site Proton acceptor is Glu-317. Catalysis depends on Cys-351, which acts as the Nucleophile.

This sequence belongs to the aldehyde dehydrogenase family.

It is found in the mitochondrion inner membrane. The catalysed reaction is L-glutamate 5-semialdehyde + NAD(+) + H2O = L-glutamate + NADH + 2 H(+). Its pathway is amino-acid degradation; L-proline degradation into L-glutamate; L-glutamate from L-proline: step 2/2. This Saccharomyces cerevisiae (strain ATCC 204508 / S288c) (Baker's yeast) protein is Delta-1-pyrroline-5-carboxylate dehydrogenase, mitochondrial (PUT2).